Here is a 300-residue protein sequence, read N- to C-terminus: Free fatty acid receptor 1 (300 aa).

Residues 1–8 (MDLPPQLS) are Extracellular-facing. Residues 9 to 31 (FALYVSAFALGFPLNLLAIRGAV) traverse the membrane as a helical segment. Residues 32–41 (SHAKLRLTPS) are Cytoplasmic-facing. The helical transmembrane segment at 42–64 (LVYTLHLACSDLLLAITLPLKAV) threads the bilayer. Over 65 to 79 (EALASGVWPLPLPFC) the chain is Extracellular. An intrachain disulfide couples cysteine 79 to cysteine 170. A helical transmembrane segment spans residues 80–101 (PVFALAHFAPLYAGGGFLAALS). Over 102 to 121 (AGRYLGAAFPFGYQAIRRPC) the chain is Cytoplasmic. Residues 122–142 (YSWGVCVAIWALVLCHLGLAL) traverse the membrane as a helical segment. The Extracellular segment spans residues 143-178 (GLEAPRGWVDNTTSSLGINIPVNGSPVCLEAWDPDS). Residue asparagine 153 is glycosylated (N-linked (GlcNAc...) asparagine). Residues 179 to 200 (ARPARLSFSILLFFLPLVITAF) form a helical membrane-spanning segment. Residues 201 to 223 (CYVGCLRALVHSGLSHKRKLRAA) are Cytoplasmic-facing. Residues 224–248 (WVAGGALLTLLLCLGPYNASNVASF) traverse the membrane as a helical segment. Residues 249–256 (INPDLEGS) are Extracellular-facing. Residues 257 to 279 (WRKLGLITGAWSVVLNPLVTGYL) form a helical membrane-spanning segment. The Cytoplasmic portion of the chain corresponds to 280–300 (GTGPGQGTICVTRTPRGTIQK).

The protein belongs to the G-protein coupled receptor 1 family. As to expression, expressed abundantly in pancreatic beta cells.

Its subcellular location is the cell membrane. Its function is as follows. G-protein coupled receptor for medium and long chain saturated and unsaturated fatty acids that plays an important role in glucose homeostasis. Fatty acid binding increases glucose-stimulated insulin secretion, and may also enhance the secretion of glucagon-like peptide 1 (GLP-1). May also play a role in bone homeostasis; receptor signaling activates pathways that inhibit osteoclast differentiation. Ligand binding leads to a conformation change that triggers signaling via G-proteins that activate phospholipase C, leading to an increase of the intracellular calcium concentration. Seems to act through a G(q) and G(i)-mediated pathway. Mediates the anti-inflammatory effects of omega-3 polyunsaturated fatty acids (PUFAs) via inhibition of NLRP3 inflammasome activation. This chain is Free fatty acid receptor 1 (Ffar1), found in Rattus norvegicus (Rat).